The following is a 580-amino-acid chain: Jasmonoyl--L-amino acid synthetase JAR6 (580 aa).

Residue Ser100 participates in ATP binding. A jasmonate-binding site is contributed by Ser103. Residues Met120, Thr123, Gly164, Asn169, and 332-337 (GSSEGW) contribute to the ATP site. An L-alpha-amino acid is bound at residue 167–171 (TTNVY). 329–332 (ADYG) is a jasmonate binding site. Position 534 to 538 (534 to 538 (KILDH)) interacts with an L-alpha-amino acid.

It belongs to the IAA-amido conjugating enzyme family.

It carries out the reaction a jasmonate + an L-alpha-amino acid + ATP = a jasmonyl-L-amino acid + AMP + diphosphate + H(+). Functionally, catalyzes the synthesis of jasmonate-amino acid conjugates by adenylation. Catalyzes the conjugation of jasmonate (JA) to Ile, Leu and Val. Catalyzes the conjugation of JA to Ile that may mediate defense signaling and resistance to the herbivore Manduca sexta caterpillars. This is Jasmonoyl--L-amino acid synthetase JAR6 (JAR6) from Nicotiana attenuata (Coyote tobacco).